The chain runs to 339 residues: MPLPPSTLNQKSNRVYSVARVYKNACEERPQEYWDYEQGVTIDWGKISNYEIINKIGRGKYSEVFSGRCIVNNQKCVIKVLKPVKMKKIYRELKILTNLTGGPNVVGLYDIVQDADSKIPALIFEEIKNVDFRTLYPTFKLPDIQYYFTQLLIALDYCHSMGIMHRDVKPQNVMIDPTERKLRLIDWGLAEFYHPGVDYNVRVASRYHKGPELLVNLNQYDYSLDLWSVGCMLAAIVFKKEPFFKGSSNPDQLVKIATVLGTKELLGYLGKYGLHLPSEYDNIMRDFTKKSWTHFITSETKLAVPEVVDLIDNLLRYDHQERLTAKEAMDHKFFKTKFE.

Residues Tyr50–Phe334 enclose the Protein kinase domain. ATP is bound by residues Ile56–Val64 and Lys79. Asp167 acts as the Proton acceptor in catalysis.

The protein belongs to the protein kinase superfamily. Ser/Thr protein kinase family. CK2 subfamily. In terms of assembly, tetramer composed of an alpha chain, an alpha', one beta chain and one beta' chain. Interacts with FACT subunits POB3 and SPT16. Interacts with NAP1. Interacts with YTA7.

The catalysed reaction is L-seryl-[protein] + ATP = O-phospho-L-seryl-[protein] + ADP + H(+). It catalyses the reaction L-threonyl-[protein] + ATP = O-phospho-L-threonyl-[protein] + ADP + H(+). Functionally, catalytic subunit of a constitutively active serine/threonine-protein kinase complex that phosphorylates a large number of substrates containing acidic residues C-terminal to the phosphorylated serine or threonine. Phosphorylates YTA7 during S-phase to promote transcription of histones. This is Casein kinase II subunit alpha' from Saccharomyces cerevisiae (strain ATCC 204508 / S288c) (Baker's yeast).